Reading from the N-terminus, the 248-residue chain is Ubiquinone/menaquinone biosynthesis C-methyltransferase UbiE (248 aa).

S-adenosyl-L-methionine-binding residues include S68 and D92.

This sequence belongs to the class I-like SAM-binding methyltransferase superfamily. MenG/UbiE family.

The enzyme catalyses a 2-demethylmenaquinol + S-adenosyl-L-methionine = a menaquinol + S-adenosyl-L-homocysteine + H(+). It catalyses the reaction a 2-methoxy-6-(all-trans-polyprenyl)benzene-1,4-diol + S-adenosyl-L-methionine = a 5-methoxy-2-methyl-3-(all-trans-polyprenyl)benzene-1,4-diol + S-adenosyl-L-homocysteine + H(+). The protein operates within quinol/quinone metabolism; menaquinone biosynthesis; menaquinol from 1,4-dihydroxy-2-naphthoate: step 2/2. Its pathway is cofactor biosynthesis; ubiquinone biosynthesis. In terms of biological role, methyltransferase required for the conversion of demethylmenaquinol (DMKH2) to menaquinol (MKH2) and the conversion of 2-polyprenyl-6-methoxy-1,4-benzoquinol (DDMQH2) to 2-polyprenyl-3-methyl-6-methoxy-1,4-benzoquinol (DMQH2). This Rickettsia felis (strain ATCC VR-1525 / URRWXCal2) (Rickettsia azadi) protein is Ubiquinone/menaquinone biosynthesis C-methyltransferase UbiE.